The primary structure comprises 765 residues: MLVSHVFLLTLSLSVPSLGQYEHWPYYPEYQGPPEPPPTQPKIVPQIHVRLAGEKRKHNEGRVEVYYEGEWGTVCDDDFSMYAAHIVCRELGYQEAVSWSPSSKYGKGEGRIWLDNVNCNGRERSIASCSSNGWGVTDCKHSEDVGVQCSDRRIPGFKVSNELPGHLEGLNIQVEDVRIRPILSAYRKRVPVTEGFAEVKVQGSWRQVCNTQWSSKNSRVVCGMFGFPSEKKYNTKVYKMFSSRRKHTYWQFSANCTGNEPHLSSCKVGGVLSPDPKTNQTCSDGAPAVVSCTPGRAFAPSPGTGFRKAFRQEQPLVRLRGGANVGEGRVEVLKNGEWGTVCDDKWNLVTASVICRELGFGSAKEALVGAQLGQGMGQIHMSEIQCNGFEKSLTDCKFNIHSQGCNHEEDAAVRCNVPAMGFENQVRLSGGRHPTEGRVEVLMERNGTLRWGTVCSETWGTMEAMIVCRQLGLGFASHAFQETWYWQGDINADDVVMSGVKCSGTEMSLAHCRHDGANVNCPRGGGRFAAGVSCVETAPDLVLNAALVEQTTYLEDRPMFMLQCAHEEQCLASSADRTSPTTGYRRLLRFSSQIHNNGQADFRPKTGRHAWIWHDCHRHYHSMEVFTHYDLLTLNGTKVAEGHKASFCLEDSECEADIQKQYVCANFGEQGITVGCWDLYRHDIDCQWVDITDVAPGDYFFQIIINPNQEVAESDYTNNIMKCRCRYDGQRIWMYNCHIGGSYSTETEEKFEHFSGLLNNQLSTR.

An N-terminal signal peptide occupies residues 1–19 (MLVSHVFLLTLSLSVPSLG). SRCR domains are found at residues 49–150 (VRLA…VQCS), 179–293 (IRPI…VSCT), 317–416 (VRLR…VRCN), and 426–535 (VRLS…VSCV). Intrachain disulfides connect C75–C139, C88–C149, C119–C129, C209–C282, C222–C292, C256–C266, C342–C405, C355–C415, and C386–C396. N279 is a glycosylation site (N-linked (GlcNAc...) asparagine). N-linked (GlcNAc...) asparagine glycosylation occurs at N446. 3 disulfides stabilise this stretch: C455–C521, C468–C534, and C502–C512. The lysyl-oxidase like stretch occupies residues 539 to 742 (PDLVLNAALV…WMYNCHIGGS (204 aa)). The Ca(2+) site is built by D540 and L541. Intrachain disulfides connect C564–C616, C570–C686, C648–C664, and C654–C676. Residues H617, H619, and H621 each contribute to the Cu cation site. N-linked (GlcNAc...) asparagine glycosylation occurs at N635. Positions 644-680 (KASFCLEDSECEADIQKQYVCANFGEQGITVGCWDLY) form a cross-link, lysine tyrosylquinone (Lys-Tyr). Y680 carries the post-translational modification 2',4',5'-topaquinone. Positions 713, 715, 718, and 719 each coordinate Ca(2+). Cysteines 723 and 737 form a disulfide.

Belongs to the lysyl oxidase family. Cu cation serves as cofactor. Lysine tyrosylquinone residue is required as a cofactor. In terms of processing, the lysine tyrosylquinone cross-link (LTQ) is generated by condensation of the epsilon-amino group of a lysine with a topaquinone produced by oxidation of tyrosine.

It localises to the secreted. The protein resides in the extracellular space. It is found in the extracellular matrix. The protein localises to the basement membrane. Its subcellular location is the nucleus. It localises to the chromosome. The protein resides in the endoplasmic reticulum. The catalysed reaction is L-lysyl-[protein] + O2 + H2O = (S)-2-amino-6-oxohexanoyl-[protein] + H2O2 + NH4(+). Its function is as follows. Mediates the post-translational oxidative deamination of lysine residues on target proteins leading to the formation of deaminated lysine (allysine). Acts as a transcription corepressor and specifically mediates deamination of trimethylated 'Lys-4' of histone H3 (H3K4me3), a specific tag for epigenetic transcriptional activation. Shows no activity against histone H3 when it is trimethylated on 'Lys-9' (H3K9me3) or 'Lys-27' (H3K27me3) or when 'Lys-4' is monomethylated (H3K4me1) or dimethylated (H3K4me2). Also mediates deamination of methylated TAF10, a member of the transcription factor IID (TFIID) complex, which induces release of TAF10 from promoters, leading to inhibition of TFIID-dependent transcription. LOXL2-mediated deamination of TAF10 results in transcriptional repression of genes required for embryonic stem cell pluripotency. Involved in epithelial to mesenchymal transition (EMT) and participates in repression of E-cadherin, probably by mediating deamination of histone H3. When secreted into the extracellular matrix, promotes cross-linking of extracellular matrix proteins by mediating oxidative deamination of peptidyl lysine residues in precursors to fibrous collagen and elastin. Acts as a regulator of sprouting angiogenesis, probably via collagen IV scaffolding. Acts as a regulator of chondrocyte differentiation, probably by regulating expression of factors that control chondrocyte differentiation. The protein is Lysyl oxidase homolog 2 (loxl2) of Xenopus laevis (African clawed frog).